Reading from the N-terminus, the 593-residue chain is Mitoguardin 2 (593 aa).

2 helical membrane-spanning segments follow: residues 11–31 (MIQA…TTFG) and 42–62 (PGLR…ALAA). Disordered regions lie at residues 103–141 (GYSS…VASM) and 196–231 (SVGQ…SQRK). Low complexity-rich tracts occupy residues 106–116 (SRRVQSPSSKS) and 123–141 (ISSI…VASM). S132 carries the post-translational modification Phosphoserine. T206 bears the Phosphothreonine mark. Phosphoserine occurs at positions 220, 224, and 228. T273 is subject to Phosphothreonine. 2 positions are modified to phosphoserine: S276 and S295. Positions 292–298 (SFFSATE) match the FFAT motif.

The protein belongs to the mitoguardin family. Homodimer and heterodimer; forms heterodimers with MIGA1. Interacts with PLD6/MitoPLD. Interacts (via phosphorylated FFAT motif) with MOSPD2, VAPA and VAPB. Phosphorylation at Ser-295 of the FFAT motif activates interaction with MOSPD2, VAPA and VAPB.

Its subcellular location is the mitochondrion outer membrane. Its function is as follows. Regulator of mitochondrial fusion: acts by forming homo- and heterodimers at the mitochondrial outer membrane and facilitating the formation of PLD6/MitoPLD dimers. May act by regulating phospholipid metabolism via PLD6/MitoPLD. The chain is Mitoguardin 2 from Homo sapiens (Human).